Consider the following 382-residue polypeptide: tRNA-specific 2-thiouridylase MnmA (382 aa).

ATP is bound by residues 34–41 (AMSGGVDS) and L60. C128 (nucleophile) is an active-site residue. An intrachain disulfide couples C128 to C224. G152 provides a ligand contact to ATP. The interval 174–176 (RDQ) is interaction with tRNA. C224 acts as the Cysteine persulfide intermediate in catalysis.

The protein belongs to the MnmA/TRMU family.

The protein resides in the cytoplasm. The catalysed reaction is S-sulfanyl-L-cysteinyl-[protein] + uridine(34) in tRNA + AH2 + ATP = 2-thiouridine(34) in tRNA + L-cysteinyl-[protein] + A + AMP + diphosphate + H(+). Functionally, catalyzes the 2-thiolation of uridine at the wobble position (U34) of tRNA, leading to the formation of s(2)U34. The sequence is that of tRNA-specific 2-thiouridylase MnmA from Sphingopyxis alaskensis (strain DSM 13593 / LMG 18877 / RB2256) (Sphingomonas alaskensis).